We begin with the raw amino-acid sequence, 102 residues long: NADH-quinone oxidoreductase subunit K 1 (102 aa).

Transmembrane regions (helical) follow at residues 5 to 25, 31 to 51, and 65 to 85; these read LSHY…GIFL, IVIL…MVAF, and LFIL…LVVF.

Belongs to the complex I subunit 4L family. As to quaternary structure, NDH-1 is composed of 14 different subunits. Subunits NuoA, H, J, K, L, M, N constitute the membrane sector of the complex.

It is found in the cell inner membrane. It catalyses the reaction a quinone + NADH + 5 H(+)(in) = a quinol + NAD(+) + 4 H(+)(out). Functionally, NDH-1 shuttles electrons from NADH, via FMN and iron-sulfur (Fe-S) centers, to quinones in the respiratory chain. The immediate electron acceptor for the enzyme in this species is believed to be ubiquinone. Couples the redox reaction to proton translocation (for every two electrons transferred, four hydrogen ions are translocated across the cytoplasmic membrane), and thus conserves the redox energy in a proton gradient. This Rhizobium etli (strain CIAT 652) protein is NADH-quinone oxidoreductase subunit K 1.